Reading from the N-terminus, the 66-residue chain is uncharacterized protein (66 aa).

An N-terminal signal peptide occupies residues 1-19 (MRRLYRHLASFFLLPSCPG).

This is an uncharacterized protein from Saccharomyces cerevisiae (strain ATCC 204508 / S288c) (Baker's yeast).